The primary structure comprises 62 residues: Conotoxin Pn-014 (62 aa).

The N-terminal stretch at 1–22 (MRCLPVFVILLLLIASAPSVDA) is a signal peptide. The propeptide occupies 23 to 48 (RPKTKDDIPLVSFQDHAKRILQTFES). Residue W61 is modified to Tryptophan amide.

Belongs to the conotoxin T superfamily. In terms of processing, contains 2 disulfide bonds that can be either 'C1-C3, C2-C4' or 'C1-C4, C2-C3', since these disulfide connectivities have been observed for conotoxins with cysteine framework V (for examples, see AC P0DQQ7 and AC P81755). In terms of tissue distribution, expressed by the venom duct.

It is found in the secreted. The protein is Conotoxin Pn-014 of Conus pennaceus (Feathered cone).